We begin with the raw amino-acid sequence, 267 residues long: 5'-nucleotidase SurE (267 aa).

Asp14, Asp15, Ser45, and Asn100 together coordinate a divalent metal cation.

It belongs to the SurE nucleotidase family. The cofactor is a divalent metal cation.

It is found in the cytoplasm. The catalysed reaction is a ribonucleoside 5'-phosphate + H2O = a ribonucleoside + phosphate. In terms of biological role, nucleotidase that shows phosphatase activity on nucleoside 5'-monophosphates. This chain is 5'-nucleotidase SurE, found in Methanosarcina acetivorans (strain ATCC 35395 / DSM 2834 / JCM 12185 / C2A).